A 722-amino-acid chain; its full sequence is Zinc finger protein 219 (722 aa).

The segment at 1-21 is disordered; that stretch reads MEGSRPRAPSGHLAPSPPAFD. The residue at position 16 (S16) is a Phosphoserine. C2H2-type zinc fingers lie at residues 57–79 and 85–107; these read FPCPVCGKRFRFNSILALHLRAH and FQCPHCGHRAAQRALLRSHLRTH. The disordered stretch occupies residues 137–160; that stretch reads ARSSGGMQATPATEGLARPQAPSS. 2 C2H2-type zinc fingers span residues 163-186 and 189-212; these read FRCPYCKGKFRTSAERERHLHILH and WKCGLCSFGSSQEEELLHHSLTAH. The tract at residues 215–275 is disordered; that stretch reads PERPLAATSA…EEPPAPPEFR (61 aa). 2 stretches are compositionally biased toward pro residues: residues 225–247 and 259–272; these read APPPQPQPQPPPQPEPRSVPQPE and TPAPAAPEEPPAPP. 2 consecutive C2H2-type zinc fingers follow at residues 274-296 and 302-324; these read FRCQVCGQSFTQSWFLKGHMRKH and HACPVCGRCFKEPWFLKNHMKVH. A disordered region spans residues 384 to 495; the sequence is LRAGEGRPNG…GTRPEGGRGA (112 aa). Residues 390 to 404 show a composition bias toward gly residues; that stretch reads RPNGEGAEPGPGRSF. Residues 425-438 are compositionally biased toward acidic residues; that stretch reads EPEEEEEVVEAEEE. Positions 463-477 are enriched in low complexity; it reads SASAAGAQARSTATQ. C2H2-type zinc fingers lie at residues 498-520 and 526-548; these read KDCPFCGKSFRSAHHLKVHLRVH and YKCPHCDYAGTQSGSLKYHLQRH. 2 disordered regions span residues 542-648 and 668-722; these read KYHL…LHRC and HHSR…GQER. Residues 558-568 show a composition bias toward pro residues; the sequence is PGPPPEPPPPS. Gly residues predominate over residues 634-643; the sequence is GPGGEAGPGG. The segment at 646–668 adopts a C2H2-type 9 zinc-finger fold; sequence HRCLFCPFATGAPELMALHLQVH. The span at 668 to 677 shows a compositional bias: basic residues; that stretch reads HHSRRARGRR. Phosphoserine is present on S692. A Phosphothreonine modification is found at T695. Position 698 is a phosphoserine (S698).

The protein belongs to the krueppel C2H2-type zinc-finger protein family. As to quaternary structure, interacts with SOX9 (via C-terminus). In terms of tissue distribution, ubiquitous.

The protein resides in the nucleus. Functionally, transcriptional regulator. Recognizes and binds 2 copies of the core DNA sequence motif 5'-GGGGG-3'. Binds to the HMGN1 promoter and may repress HMGN1 expression. Regulates SNCA expression in primary cortical neurons. Binds to the COL2A1 promoter and activates COL2A1 expression, as part of a complex with SOX9. Plays a role in chondrocyte differentiation. This chain is Zinc finger protein 219 (ZNF219), found in Homo sapiens (Human).